A 115-amino-acid polypeptide reads, in one-letter code: Large ribosomal subunit protein uL24 (115 aa).

It belongs to the universal ribosomal protein uL24 family. Part of the 50S ribosomal subunit.

In terms of biological role, one of two assembly initiator proteins, it binds directly to the 5'-end of the 23S rRNA, where it nucleates assembly of the 50S subunit. Functionally, one of the proteins that surrounds the polypeptide exit tunnel on the outside of the subunit. The polypeptide is Large ribosomal subunit protein uL24 (Synechocystis sp. (strain ATCC 27184 / PCC 6803 / Kazusa)).